Reading from the N-terminus, the 310-residue chain is Zinc finger protein unc-98 (310 aa).

A compositionally biased stretch (polar residues) spans 73 to 84; that stretch reads GSSSAQTPTKSS. A disordered region spans residues 73 to 102; the sequence is GSSSAQTPTKSSGGALDGSDQQEVRQDGTS. 2 consecutive C2H2-type zinc fingers follow at residues 113 to 135 and 141 to 163; these read YKCR…ERIH and YVCG…AAQH. Residues 169–188 form a C2H2-type 3; degenerate zinc finger; it reads YKCECGRTFFSYTEMLYHKH. The interaction with myo-3 stretch occupies residues 198 to 310; it reads APETTTIKVS…RTSGYVTPRF (113 aa). The segment at 246-268 adopts a C2H2-type 4 zinc-finger fold; the sequence is YICEYCSKSYSDSRGLAYHMYSH.

As to quaternary structure, interacts with hum-6, mep-1, myo-3, unc-96 and unc-97/PINCH. As to expression, expressed in embryos from 1.5- to 2-fold stage in myofibrils. In larvae and adults, it is expressed in body wall muscle, and in addition, anal depressor muscle and vulval muscles. More specifically it is found in the thick filaments of muscle fibers.

The protein localises to the nucleus. It is found in the cytoplasm. Probable transcription factor required for muscle structure. Its dual subcellular localization suggests that it may function both as a muscle adhesion complex protein and as a transcription factor, or work together with transcription factors, to influence gene expression. Thought to act as a molecular bridge between unc-97 and myo-3 at the M-line of muscles, possibly in a signaling role. Plays a role in the formation of muscle connections, also called muscle arm extensions, between the body wall and the motor axons in the dorsal and ventral cord. In Caenorhabditis elegans, this protein is Zinc finger protein unc-98 (unc-98).